Consider the following 248-residue polypeptide: Cell division protein ZapD (248 aa).

Belongs to the ZapD family. In terms of assembly, interacts with FtsZ.

It is found in the cytoplasm. Functionally, cell division factor that enhances FtsZ-ring assembly. Directly interacts with FtsZ and promotes bundling of FtsZ protofilaments, with a reduction in FtsZ GTPase activity. The polypeptide is Cell division protein ZapD (Aliivibrio fischeri (strain ATCC 700601 / ES114) (Vibrio fischeri)).